The sequence spans 446 residues: Chromosomal replication initiator protein DnaA (446 aa).

Positions 1-81 (MENISDLWNS…AKLAIRFIIP (81 aa)) are domain I, interacts with DnaA modulators. A domain II region spans residues 81-109 (PQSQAEEDIDLPPVKPNPAQDDSAHLPQS). A domain III, AAA+ region region spans residues 110 to 326 (MLNPKYTFDT…GALIRVVAYS (217 aa)). Residues glycine 154, glycine 156, lysine 157, and threonine 158 each coordinate ATP. The interval 327-446 (SLINKDINAD…QVEEINGILK (120 aa)) is domain IV, binds dsDNA.

It belongs to the DnaA family. Oligomerizes as a right-handed, spiral filament on DNA at oriC.

It is found in the cytoplasm. In terms of biological role, plays an essential role in the initiation and regulation of chromosomal replication. ATP-DnaA binds to the origin of replication (oriC) to initiate formation of the DNA replication initiation complex once per cell cycle. Binds the DnaA box (a 9 base pair repeat at the origin) and separates the double-stranded (ds)DNA. Forms a right-handed helical filament on oriC DNA; dsDNA binds to the exterior of the filament while single-stranded (ss)DNA is stabiized in the filament's interior. The ATP-DnaA-oriC complex binds and stabilizes one strand of the AT-rich DNA unwinding element (DUE), permitting loading of DNA polymerase. After initiation quickly degrades to an ADP-DnaA complex that is not apt for DNA replication. Binds acidic phospholipids. In Bacillus cereus (strain B4264), this protein is Chromosomal replication initiator protein DnaA.